Consider the following 196-residue polypeptide: Ribonuclease S-F11 (196 aa).

Cysteines 16 and 21 form a disulfide. Residue N28 is glycosylated (N-linked (GlcNAc...) asparagine). H32 acts as the Proton donor in catalysis. RNA contacts are provided by residues H32 and 69–70; that span reads QL. 3 cysteine pairs are disulfide-bonded: C46/C94, C153/C186, and C169/C180. Residue Q87 is part of the active site. An RNA-binding site is contributed by 90 to 91; the sequence is KH. H91 acts as the Proton acceptor in catalysis.

Belongs to the RNase T2 family. As to quaternary structure, monomer.

The protein localises to the secreted. It localises to the extracellular space. It carries out the reaction a ribonucleotidyl-ribonucleotide-RNA + H2O = a 3'-end 3'-phospho-ribonucleotide-RNA + a 5'-end dephospho-ribonucleoside-RNA + H(+). Its function is as follows. Self-incompatibility (SI) is the inherited ability of a flowering plant to prevent self-fertilization by discriminating between self and non-self pollen during pollination. In many species of the Solanaceae, self-incompatibility is controlled by the single, multiallelic locus S. The protein is Ribonuclease S-F11 of Nicotiana alata (Winged tobacco).